The following is a 514-amino-acid chain: Voltage-gated potassium channel regulatory subunit KCNG1 (514 aa).

Over 1 to 224 (MTLLPGDNSD…DMVEKPHSGL (224 aa)) the chain is Cytoplasmic. Positions 181–196 (EREDEEEALDSEDQES) are enriched in acidic residues. Residues 181-205 (EREDEEEALDSEDQESEGPSTSEGR) are disordered. The helical transmembrane segment at 225–246 (PGKVFACLSVLFVTVTAVNLSV) threads the bilayer. Residues 247–267 (STLPSLREEEEQGQCSQMCHN) are Extracellular-facing. A helical membrane pass occupies residues 268–289 (VFIVESVCVGWFSLEFLLRFIQ). The Cytoplasmic segment spans residues 290-300 (APSKFAFLRSP). Residues 301 to 321 (LTLIDLVAILPYYVTLLVDGA) traverse the membrane as a helical segment. The Extracellular segment spans residues 322 to 338 (ASSRRKPSTGNSYLDKV). A helical; Voltage-sensor membrane pass occupies residues 339-359 (GLVLRVLRALRILYVMRLARH). Over 360 to 374 (SLGLQTLGLTARRCT) the chain is Cytoplasmic. The helical transmembrane segment at 375 to 396 (REFGLLLLFLCVAIALFAPLLY) threads the bilayer. Residues 397-411 (VIENEMADSPEFTSI) are Extracellular-facing. The helical intramembrane region spans 412 to 423 (PACYWWAVITMT). Positions 424-429 (TVGYGD) match the Selectivity filter motif. Residues 424-431 (TVGYGDMV) lie within the membrane without spanning it. The Extracellular segment spans residues 432–438 (PRSTPGQ). The chain crosses the membrane as a helical span at residues 439–467 (VVALSSILSGILLMAFPVTSIFHTFSRSY). The Cytoplasmic segment spans residues 468–514 (LELKQEQERVLIRRAQYLIKTKSQLSGMSQDSDILFGSASSDTRDNN).

The protein belongs to the potassium channel family. G (TC 1.A.1.2) subfamily. Kv6.1/KCNG1 sub-subfamily. As to quaternary structure, heterotetramer with KCNB1 or KCNB2.

Its subcellular location is the cell membrane. Its function is as follows. Regulatory alpha-subunit of the voltage-gated potassium (Kv) channel which, when coassembled with KCNB1 or KCNB2, can modulate their expression and their gating kinetics by acting on deactivation upon repolarization and inactivation during maintained depolarization. Potassium channel subunit that does not form functional channels by itself. This chain is Voltage-gated potassium channel regulatory subunit KCNG1, found in Rattus norvegicus (Rat).